The chain runs to 680 residues: MESSSSSNSYFSVGPTSPSAVVLLYSKELKKWDEFEDILEERRHVSDLKFAMKCYTPLVYKGITPCKPIDIKCSVLNSEEIHYVIKQLSKESLQSVDVLREEVSEILDEMSHKLRLGAIRFCAFTLSKVFKQIFSKVCVNEEGIQKLQRAIQEHPVVLLPSHRSYIDFLMLSFLLYNYDLPVPVIAAGMDFLGMKMVGELLRMSGAFFMRRTFGGNKLYWAVFSEYVKTMLRNGYAPVEFFLEGTRSRSAKTLTPKFGLLNIVMEPFFKREVFDTYLVPISISYDKILEETLYVYELLGVPKPKESTTGLLKARKILSENFGSIHVYFGDPVSLRSLAAGRMSRSSYNLVPRYIPQKQSEDMHAFVTEVAYKMELLQIENMVLSPWTLIVAVLLQNRPSMDFDALVEKTLWLKGLTQAFGGFLIWPDNKPAEEVVPASILLHSNIASLVKDQVILKVDSGDSEVVDGLMLQHITLLMCSAYRNQLLNIFVRPSLVAVALQMTPGFRKEDVYSCFRFLRDVFADEFIFLPGNTLKDFEEGCYLLCKSEAIQVTTKDILVTEKGNTVLEFLVGLFKPFVESYQIICKYLLSEEEDHFSEEQYLAAVRKFTSQLLDQGTSQCYDVLSSDVQKNALAACVRLGVVEKKKINNNCIFNVNEPATTKLEEMLGCKTPIGKPATAKL.

Phosphoserine is present on residues Ser12 and Ser17. Positions His162–Asp167 match the HXXXXD motif motif. Residue Lys643 is modified to N6-acetyllysine. A Microbody targeting signal motif is present at residues Ala678–Leu680.

The protein belongs to the GPAT/DAPAT family. In terms of assembly, part of a heterotrimeric complex composed of GNPAT, AGPS and a modified form of GNPAT.

It localises to the peroxisome membrane. It catalyses the reaction dihydroxyacetone phosphate + an acyl-CoA = a 1-acylglycerone 3-phosphate + CoA. It carries out the reaction dihydroxyacetone phosphate + hexadecanoyl-CoA = 1-hexadecanoylglycerone 3-phosphate + CoA. It functions in the pathway membrane lipid metabolism; glycerophospholipid metabolism. Dihydroxyacetonephosphate acyltransferase catalyzing the first step in the biosynthesis of plasmalogens, a subset of phospholipids that differ from other glycerolipids by having an alkyl chain attached through a vinyl ether linkage at the sn-1 position of the glycerol backbone, and which unique physical properties have an impact on various aspects of cell signaling and membrane biology. In Homo sapiens (Human), this protein is Dihydroxyacetone phosphate acyltransferase.